A 206-amino-acid polypeptide reads, in one-letter code: Ribosomal RNA small subunit methyltransferase G (206 aa).

Residues Gly-71, Phe-76, 125–126 (IE), and Arg-139 each bind S-adenosyl-L-methionine.

This sequence belongs to the methyltransferase superfamily. RNA methyltransferase RsmG family.

It is found in the cytoplasm. It catalyses the reaction guanosine(527) in 16S rRNA + S-adenosyl-L-methionine = N(7)-methylguanosine(527) in 16S rRNA + S-adenosyl-L-homocysteine. Functionally, specifically methylates the N7 position of guanine in position 527 of 16S rRNA. The chain is Ribosomal RNA small subunit methyltransferase G from Cereibacter sphaeroides (strain ATCC 17029 / ATH 2.4.9) (Rhodobacter sphaeroides).